A 269-amino-acid polypeptide reads, in one-letter code: UPF0354 protein YtpQ (269 aa).

The protein belongs to the UPF0354 family.

The sequence is that of UPF0354 protein YtpQ (ytpQ) from Bacillus subtilis (strain 168).